A 121-amino-acid polypeptide reads, in one-letter code: Large ribosomal subunit protein uL14 (121 aa).

The protein belongs to the universal ribosomal protein uL14 family. As to quaternary structure, part of the 50S ribosomal subunit. Forms a cluster with proteins L3 and L19. In the 70S ribosome, L14 and L19 interact and together make contacts with the 16S rRNA in bridges B5 and B8.

In terms of biological role, binds to 23S rRNA. Forms part of two intersubunit bridges in the 70S ribosome. This is Large ribosomal subunit protein uL14 from Aquifex aeolicus (strain VF5).